The sequence spans 585 residues: Putative phospholipase B-like 2 (585 aa).

Residues 1–35 (MAAPMDRTHGGRAARALRRALALASLAGLLLSGLA) form the signal peptide. N-linked (GlcNAc...) asparagine glycans are attached at residues asparagine 84, asparagine 102, and asparagine 106. Cysteine 138 and cysteine 148 form a disulfide bridge. 2 N-linked (GlcNAc...) asparagine glycosylation sites follow: asparagine 227 and asparagine 432. Cysteine 488 and cysteine 491 are oxidised to a cystine. An N-linked (GlcNAc...) asparagine glycan is attached at asparagine 511.

This sequence belongs to the phospholipase B-like family. Interacts with IGF2R. Post-translationally, glycosylated; contains mannose 6-phosphate sugars.

It localises to the lysosome lumen. In terms of biological role, putative phospholipase. The protein is Putative phospholipase B-like 2 (Plbd2) of Rattus norvegicus (Rat).